Consider the following 925-residue polypeptide: Isoleucine--tRNA ligase (925 aa).

A 'HIGH' region motif is present at residues 57–67 (PYANGDIHIGH). Residue glutamate 553 coordinates L-isoleucyl-5'-AMP. The 'KMSKS' region signature appears at 594–598 (KMSKS). Lysine 597 contributes to the ATP binding site. The Zn(2+) site is built by cysteine 889, cysteine 892, cysteine 909, and cysteine 912.

Belongs to the class-I aminoacyl-tRNA synthetase family. IleS type 1 subfamily. As to quaternary structure, monomer. It depends on Zn(2+) as a cofactor.

It localises to the cytoplasm. It catalyses the reaction tRNA(Ile) + L-isoleucine + ATP = L-isoleucyl-tRNA(Ile) + AMP + diphosphate. Its function is as follows. Catalyzes the attachment of isoleucine to tRNA(Ile). As IleRS can inadvertently accommodate and process structurally similar amino acids such as valine, to avoid such errors it has two additional distinct tRNA(Ile)-dependent editing activities. One activity is designated as 'pretransfer' editing and involves the hydrolysis of activated Val-AMP. The other activity is designated 'posttransfer' editing and involves deacylation of mischarged Val-tRNA(Ile). In Brevibacillus brevis (strain 47 / JCM 6285 / NBRC 100599), this protein is Isoleucine--tRNA ligase.